The following is a 336-amino-acid chain: NmrA-like family domain-containing oxidoreductase malD (336 aa).

NADP(+) contacts are provided by residues 12 to 17 (GGTGNQ), 40 to 44 (RDPTS), 61 to 62 (DG), 82 to 84 (TNS), Lys140, and 163 to 166 (FMEA).

Belongs to the NmrA-type oxidoreductase family.

Its function is as follows. NmrA-like family domain-containing oxidoreductase; part of the gene cluster that mediates the biosynthesis of malbrancheamide, a dichlorinated fungal indole alkaloid that belongs to a family of natural products containing a characteristic bicyclo[2.2.2]diazaoctane core. The first step of malbrancheamide biosynthesis involves coupling of L-proline and L-tryptophan by malG, a bimodular NRPS, to produce L-Pro-L-Trp aldehyde through reductive offloading. This compound undergoes spontaneous cyclization and dehydration to give a dienamine which is reverse prenylated at C-2 by malE. The other prenyltransferase present in the cluster, malB, displays modest activity, suggesting that may be a redundant gene in the pathway. Subsequently, a [4+2] Diels-Alder cyclo-addition catalyzed by the bifunctional enzyme malC forms the characteristic bicyclo[2.2.2]diazaoctane ring of premalbrancheamid. Finally, the flavin-dependent halogenase malA catalyzes the iterative dichlorination of the indole ring of premalbrancheamide to yield C-9 monochlorinated malbrancheamide B, C-8 monochlorinated isomalbrancheamide B, and dichlorinated malbrancheamide. MalA is also able to brominate premalbrancheamide at C-9 to yield malbrancheamide C, and, to a lesser extend, at C-8 to yield isomalbrancheamide C. Finally, malA can brominate C-9 monochlorinated malbrancheamide B at C-8 to yield malbrancheamide D, or C-8 monochlorinated isomalbrancheamide B at C-9 to produce isomalbrancheamide D. In Malbranchea aurantiaca, this protein is NmrA-like family domain-containing oxidoreductase malD.